The following is a 180-amino-acid chain: Small ribosomal subunit protein uS4 (180 aa).

Residues 103–165 (RRLQTLVYKK…KNSPFAKESH (63 aa)) form the S4 RNA-binding domain.

This sequence belongs to the universal ribosomal protein uS4 family. Part of the 30S ribosomal subunit. Contacts protein S5. The interaction surface between S4 and S5 is involved in control of translational fidelity.

Functionally, one of the primary rRNA binding proteins, it binds directly to 16S rRNA where it nucleates assembly of the body of the 30S subunit. In terms of biological role, with S5 and S12 plays an important role in translational accuracy. This is Small ribosomal subunit protein uS4 from Thermococcus gammatolerans (strain DSM 15229 / JCM 11827 / EJ3).